An 869-amino-acid chain; its full sequence is Probable beta-glucosidase F (869 aa).

Residues 1 to 19 (MRVLSAIALVASLASSALS) form the signal peptide. N-linked (GlcNAc...) asparagine glycosylation is found at N77 and N261. D289 is a catalytic residue. N-linked (GlcNAc...) asparagine glycosylation is found at N332, N364, N399, and N478. Residues 677-697 (STYPPTRPPKGPTPTYPTAIP) are disordered. Pro residues predominate over residues 681–691 (PTRPPKGPTPT). A glycan (N-linked (GlcNAc...) asparagine) is linked at N728.

It belongs to the glycosyl hydrolase 3 family.

Its subcellular location is the secreted. The catalysed reaction is Hydrolysis of terminal, non-reducing beta-D-glucosyl residues with release of beta-D-glucose.. The protein operates within glycan metabolism; cellulose degradation. Beta-glucosidases are one of a number of cellulolytic enzymes involved in the degradation of cellulosic biomass. Catalyzes the last step releasing glucose from the inhibitory cellobiose. This Aspergillus fumigatus (strain ATCC MYA-4609 / CBS 101355 / FGSC A1100 / Af293) (Neosartorya fumigata) protein is Probable beta-glucosidase F (bglF).